The chain runs to 199 residues: dITP/XTP pyrophosphatase (199 aa).

8–13 (SGNAGK) provides a ligand contact to substrate. Aspartate 69 functions as the Proton acceptor in the catalytic mechanism. Mg(2+) is bound at residue aspartate 69. Residues serine 70, 154–157 (FGYN), lysine 177, and 182–183 (HR) contribute to the substrate site.

Belongs to the HAM1 NTPase family. In terms of assembly, homodimer. The cofactor is Mg(2+).

It catalyses the reaction XTP + H2O = XMP + diphosphate + H(+). It carries out the reaction dITP + H2O = dIMP + diphosphate + H(+). The enzyme catalyses ITP + H2O = IMP + diphosphate + H(+). Its function is as follows. Pyrophosphatase that catalyzes the hydrolysis of nucleoside triphosphates to their monophosphate derivatives, with a high preference for the non-canonical purine nucleotides XTP (xanthosine triphosphate), dITP (deoxyinosine triphosphate) and ITP. Seems to function as a house-cleaning enzyme that removes non-canonical purine nucleotides from the nucleotide pool, thus preventing their incorporation into DNA/RNA and avoiding chromosomal lesions. This is dITP/XTP pyrophosphatase from Xylella fastidiosa (strain Temecula1 / ATCC 700964).